The following is a 237-amino-acid chain: Segregation and condensation protein A (237 aa).

This sequence belongs to the ScpA family. Component of a cohesin-like complex composed of ScpA, ScpB and the Smc homodimer, in which ScpA and ScpB bind to the head domain of Smc. The presence of the three proteins is required for the association of the complex with DNA.

The protein resides in the cytoplasm. Participates in chromosomal partition during cell division. May act via the formation of a condensin-like complex containing Smc and ScpB that pull DNA away from mid-cell into both cell halves. This chain is Segregation and condensation protein A, found in Streptococcus thermophilus (strain ATCC BAA-250 / LMG 18311).